Here is a 355-residue protein sequence, read N- to C-terminus: Putative arylamide transporter (355 aa).

The next 6 helical transmembrane spans lie at 22–42 (TVLW…YLTH), 44–64 (VFNH…MSAT), 71–91 (RAQQ…GVHA), 92–112 (LLGS…SVAV), 119–139 (VAQG…VLVF), and 150–170 (LFDA…LFPP).

Its subcellular location is the cell membrane. Its function is as follows. May be involved in the import of arylamide compounds. This chain is Putative arylamide transporter, found in Mycobacterium bovis (strain ATCC BAA-935 / AF2122/97).